The primary structure comprises 261 residues: CD40 ligand (261 aa).

The Cytoplasmic portion of the chain corresponds to 1–22 (MIETYNQPVPRSAATGPPVSMK). The helical; Signal-anchor for type II membrane protein transmembrane segment at 23–43 (IFMYLLTVFLITQMIGSALFA) threads the bilayer. The Extracellular portion of the chain corresponds to 44–261 (VYLHRRLDKI…GFTSFGLLKL (218 aa)). The region spanning 122–261 (IAAHVISEAS…GFTSFGLLKL (140 aa)) is the THD domain. Cysteines 178 and 218 form a disulfide. Residue Asn-240 is glycosylated (N-linked (GlcNAc...) asparagine).

The protein belongs to the tumor necrosis factor family. As to quaternary structure, homotrimer. Interacts with CD28. CD40 ligand, soluble form: Exists as either a monomer or a homotrimer. Forms a ternary complex between CD40 and integrins for CD40-CD40LG signaling. The soluble form derives from the membrane form by proteolytic processing.

It is found in the cell membrane. Its subcellular location is the cell surface. The protein resides in the secreted. Cytokine that acts as a ligand to CD40/TNFRSF5. Costimulates T-cell proliferation and cytokine production. Its cross-linking on T-cells generates a costimulatory signal which enhances the production of IL4 and IL10 in conjunction with the TCR/CD3 ligation and CD28 costimulation. Induces the activation of NF-kappa-B. Induces the activation of kinases MAPK8 and PAK2 in T-cells. Mediates B-cell proliferation in the absence of co-stimulus as well as IgE production in the presence of IL4. Involved in immunoglobulin class switching. Its function is as follows. Acts as a ligand for integrins, specifically ITGA5:ITGB1 and ITGAV:ITGB3; both integrins and the CD40 receptor are required for activation of CD40-CD40LG signaling, which have cell-type dependent effects, such as B-cell activation, NF-kappa-B signaling and anti-apoptotic signaling. The sequence is that of CD40 ligand (CD40LG) from Callithrix jacchus (White-tufted-ear marmoset).